The sequence spans 225 residues: MKHLFKLDPAKNLPMNDLTKLVHSGTNGFIIGGTDNVQIEAVQKLYELLGETDLPIFLEISNESMILPEADHFLIPVVLNTENSKWTHGLHQELIKEMGAFIPWKRVTAEGYVILNKDAKVAHLTEAKTDLTDEDIVAYARLAENIFHLPIFYVEYSGMYGDPEVVRKASAALSNTKFWYGGGIRSKEQAAEMVKYADTIIVGNIIYEDLEKALETATIFRKKTV.

A sn-glycerol 1-phosphate-binding site is contributed by K6. Residues D8 and T34 each coordinate Mg(2+). Sn-glycerol 1-phosphate-binding positions include 153 to 158 (YVEYSG), G183, and 203 to 204 (GN).

This sequence belongs to the GGGP/HepGP synthase family. Group I subfamily. In terms of assembly, homodimer. The cofactor is Mg(2+).

The catalysed reaction is sn-glycerol 1-phosphate + all-trans-heptaprenyl diphosphate = 3-heptaprenyl-sn-glycero-1-phosphate + diphosphate. Its pathway is membrane lipid metabolism; glycerophospholipid metabolism. Prenyltransferase that catalyzes in vivo the transfer of the heptaprenyl moiety of heptaprenyl pyrophosphate (HepPP; 35 carbon atoms) to the C3 hydroxyl of sn-glycerol-1-phosphate (G1P), producing heptaprenylglyceryl phosphate (HepGP). This reaction is an ether-bond-formation step in the biosynthesis of archaea-type G1P-based membrane lipids found in Bacillales. In Listeria monocytogenes serotype 4b (strain CLIP80459), this protein is Heptaprenylglyceryl phosphate synthase.